Here is a 343-residue protein sequence, read N- to C-terminus: Mitotic checkpoint protein bub-3 (343 aa).

7 WD repeats span residues 21–62, 67–105, 107–146, 150–187, 192–232, 249–288, and 291–331; these read PPFV…DISE, THGK…GTQL, SHAL…NGAI, NVSS…EPLQ, PLKY…EMMK, ELIH…RIIQ, and KFET…NSIT. The tract at residues 322–343 is disordered; it reads PSPLPNNSITIRHITDPESRPK. The segment covering 334 to 343 has biased composition (basic and acidic residues); it reads HITDPESRPK.

The protein belongs to the WD repeat BUB3 family. May interact with bub-1; for localization at the kinetochore and the onset of anaphase.

It is found in the chromosome. Its subcellular location is the centromere. The protein localises to the kinetochore. It localises to the nucleus. In terms of biological role, has a dual function in spindle-assembly checkpoint signaling and in promoting the establishment of correct kinetochore-microtubule (K-MT) attachments. Promotes the formation of stable end-on bipolar attachments of chromosomes. Necessary for expression and kinetochore localization of bub-1. Plays a role in synapsis checkpoint signaling inducing apoptosis in response to unsynapsed chromosomes and thus controlling chromosomal segregation during oocyte meiosis. In Caenorhabditis elegans, this protein is Mitotic checkpoint protein bub-3.